The chain runs to 687 residues: Macrolide export ATP-binding/permease protein MacB (687 aa).

In terms of domain architecture, ABC transporter spans 6–244 (LKLAAVTRRF…LAEAGVDAAE (239 aa)). 42–49 (GASGSGKS) is a binding site for ATP. The segment covering 246 to 256 (AEASEAAVGES) has biased composition (low complexity). A disordered region spans residues 246–281 (AEASEAAVGESPTRNRHDTPAPPAAVDTDPHVDTGT). A run of 4 helical transmembrane segments spans residues 312–332 (LLTM…VAIG), 560–580 (LTLL…IGVM), 617–637 (LVCL…GALF), and 650–670 (AGAI…FGFM).

It belongs to the ABC transporter superfamily. Macrolide exporter (TC 3.A.1.122) family. In terms of assembly, homodimer.

It is found in the cell inner membrane. Its function is as follows. Non-canonical ABC transporter that contains transmembrane domains (TMD), which form a pore in the inner membrane, and an ATP-binding domain (NBD), which is responsible for energy generation. Confers resistance against macrolides. The chain is Macrolide export ATP-binding/permease protein MacB from Burkholderia lata (strain ATCC 17760 / DSM 23089 / LMG 22485 / NCIMB 9086 / R18194 / 383).